Reading from the N-terminus, the 185-residue chain is Ribosome-recycling factor (185 aa).

Belongs to the RRF family.

It is found in the cytoplasm. Functionally, responsible for the release of ribosomes from messenger RNA at the termination of protein biosynthesis. May increase the efficiency of translation by recycling ribosomes from one round of translation to another. This is Ribosome-recycling factor from Buchnera aphidicola subsp. Acyrthosiphon pisum (strain 5A).